The chain runs to 756 residues: Polyribonucleotide nucleotidyltransferase (756 aa).

Positions 527 and 533 each coordinate Mg(2+). Residues 593-652 enclose the KH domain; that stretch reads PRITTIKVPVDKIGEVIGPKGKMINSITEETGASISIEDDGTVFVGASNGEAAQAAIDKI. The region spanning 664 to 733 is the S1 motif domain; that stretch reads GERFLGTVVK…NRGKISLVLV (70 aa).

It belongs to the polyribonucleotide nucleotidyltransferase family. It depends on Mg(2+) as a cofactor.

It localises to the cytoplasm. The enzyme catalyses RNA(n+1) + phosphate = RNA(n) + a ribonucleoside 5'-diphosphate. Its function is as follows. Involved in mRNA degradation. Catalyzes the phosphorolysis of single-stranded polyribonucleotides processively in the 3'- to 5'-direction. The chain is Polyribonucleotide nucleotidyltransferase from Mycolicibacterium gilvum (strain PYR-GCK) (Mycobacterium gilvum (strain PYR-GCK)).